A 614-amino-acid polypeptide reads, in one-letter code: Signal recognition particle receptor subunit alpha homolog (614 aa).

A disordered region spans residues 119 to 244 (EASAKQVKAP…DRSRDSPDDV (126 aa)). A compositionally biased stretch (basic and acidic residues) spans 149 to 160 (QDDKKPVEKRVN). Residues 164-178 (APPPSKSQPSSPPTG) are compositionally biased toward pro residues. Positions 232 to 241 (ALLDRSRDSP) are enriched in basic and acidic residues. 2 positions are modified to phosphoserine: Ser237 and Ser240. Tyr246 is subject to Phosphotyrosine. Phosphoserine occurs at positions 268, 278, and 279. Residues 268-285 (SEDEADNEDASSEGEAEE) are compositionally biased toward acidic residues. Residues 268–290 (SEDEADNEDASSEGEAEEQVQSK) form a disordered region. The interval 396–613 (YTIIFCGVNG…NVNAVVNSLM (218 aa)) is NG domain. Residues 402–409 (GVNGVGKS), 497–501 (DTAGR), and 565–568 (TKFD) each bind GTP.

Belongs to the GTP-binding SRP family. As to quaternary structure, heterodimer of SrpRalpha and SrpRbeta. As to expression, in 8-9 hours embryos, expression is seen in a segmental pattern along embryonic ventral midline.

Its subcellular location is the endoplasmic reticulum membrane. Its function is as follows. Component of the SRP (signal recognition particle) receptor. Ensures, in conjunction with the signal recognition particle, the correct targeting of the nascent secretory proteins to the endoplasmic reticulum membrane system. Forms a guanosine 5'-triphosphate (GTP)-dependent complex with the SRP subunit Srp54. SRP receptor compaction and GTPase rearrangement drive SRP-mediated cotranslational protein translocation into the ER. May have a role in axonogenesis. In Drosophila melanogaster (Fruit fly), this protein is Signal recognition particle receptor subunit alpha homolog.